Reading from the N-terminus, the 357-residue chain is tRNA/tmRNA (uracil-C(5))-methyltransferase (357 aa).

Positions 180, 209, 214, 230, and 290 each coordinate S-adenosyl-L-methionine. Catalysis depends on Cys315, which acts as the Nucleophile. Glu349 serves as the catalytic Proton acceptor.

Belongs to the class I-like SAM-binding methyltransferase superfamily. RNA M5U methyltransferase family. TrmA subfamily.

The catalysed reaction is uridine(54) in tRNA + S-adenosyl-L-methionine = 5-methyluridine(54) in tRNA + S-adenosyl-L-homocysteine + H(+). It carries out the reaction uridine(341) in tmRNA + S-adenosyl-L-methionine = 5-methyluridine(341) in tmRNA + S-adenosyl-L-homocysteine + H(+). In terms of biological role, dual-specificity methyltransferase that catalyzes the formation of 5-methyluridine at position 54 (m5U54) in all tRNAs, and that of position 341 (m5U341) in tmRNA (transfer-mRNA). The sequence is that of tRNA/tmRNA (uracil-C(5))-methyltransferase from Campylobacter jejuni subsp. jejuni serotype O:23/36 (strain 81-176).